Reading from the N-terminus, the 306-residue chain is Putative type I specificity subunit S.MpnORF285P (306 aa).

Belongs to the type-I restriction system S methylase family. The methyltransferase is composed of M and S polypeptides.

In terms of biological role, the specificity (S) subunit of a type I methyltransferase (MTase); this subunit dictates DNA sequence specificity. The single R subunit has multiple frameshifts and is probably not expressed. The sequence is that of Putative type I specificity subunit S.MpnORF285P from Mycoplasma pneumoniae (strain ATCC 29342 / M129 / Subtype 1) (Mycoplasmoides pneumoniae).